We begin with the raw amino-acid sequence, 395 residues long: Probable eukaryotic translation initiation factor 5 (395 aa).

28-35 contacts GTP; it reads GKGNGIKT. 2 disordered regions span residues 146–171 and 374–395; these read PPAK…AEDE and LAEA…DDDE. Positions 147 to 157 are enriched in basic residues; sequence PAKKKSHKHKR. Acidic residues-rich tracts occupy residues 161-170 and 377-395; these read VAEEEDGAED and ASDE…DDDE. The 157-residue stretch at 228-384 folds into the W2 domain; the sequence is EEAESSRYDQ…AEASDESESE (157 aa).

It belongs to the eIF-2-beta/eIF-5 family. In terms of assembly, monomer.

Catalyzes the hydrolysis of GTP bound to the 40S ribosomal initiation complex (40S.mRNA.Met-tRNA[F].eIF-2.GTP) with the subsequent joining of a 60S ribosomal subunit resulting in the release of eIF-2 and the guanine nucleotide. The subsequent joining of a 60S ribosomal subunit results in the formation of a functional 80S initiation complex (80S.mRNA.Met-tRNA[F]). The sequence is that of Probable eukaryotic translation initiation factor 5 (tif5) from Schizosaccharomyces pombe (strain 972 / ATCC 24843) (Fission yeast).